The primary structure comprises 129 residues: M-zodatoxin-Lt8k (129 aa).

The N-terminal stretch at 1 to 20 is a signal peptide; the sequence is MKYFVVALALVAAFACIAES. A propeptide spanning residues 21–60 is cleaved from the precursor; the sequence is KPAESEHELAEVEEENELADLEDAVWLEHLADLSDLEEAR.

The protein belongs to the cationic peptide 06 (cytoinsectotoxin) family. In terms of tissue distribution, expressed by the venom gland.

The protein resides in the secreted. In terms of biological role, insecticidal, cytolytic and antimicrobial peptide. Forms voltage-dependent, ion-permeable channels in membranes. At high concentration causes cell membrane lysis. The protein is M-zodatoxin-Lt8k (cit 1-10) of Lachesana tarabaevi (Spider).